Reading from the N-terminus, the 285-residue chain is Bifunctional protein FolD (285 aa).

Residues 165-167 and Ser190 each bind NADP(+); that span reads GRS.

It belongs to the tetrahydrofolate dehydrogenase/cyclohydrolase family. Homodimer.

The enzyme catalyses (6R)-5,10-methylene-5,6,7,8-tetrahydrofolate + NADP(+) = (6R)-5,10-methenyltetrahydrofolate + NADPH. It catalyses the reaction (6R)-5,10-methenyltetrahydrofolate + H2O = (6R)-10-formyltetrahydrofolate + H(+). It participates in one-carbon metabolism; tetrahydrofolate interconversion. Catalyzes the oxidation of 5,10-methylenetetrahydrofolate to 5,10-methenyltetrahydrofolate and then the hydrolysis of 5,10-methenyltetrahydrofolate to 10-formyltetrahydrofolate. In Burkholderia multivorans (strain ATCC 17616 / 249), this protein is Bifunctional protein FolD.